The following is a 433-amino-acid chain: Enolase (433 aa).

Gln167 serves as a coordination point for (2R)-2-phosphoglycerate. Catalysis depends on Glu209, which acts as the Proton donor. 3 residues coordinate Mg(2+): Asp246, Glu291, and Asp318. Lys343, Arg372, Ser373, and Lys394 together coordinate (2R)-2-phosphoglycerate. The active-site Proton acceptor is Lys343.

The protein belongs to the enolase family. In terms of assembly, component of the RNA degradosome, a multiprotein complex involved in RNA processing and mRNA degradation. The cofactor is Mg(2+).

The protein resides in the cytoplasm. Its subcellular location is the secreted. It is found in the cell surface. The enzyme catalyses (2R)-2-phosphoglycerate = phosphoenolpyruvate + H2O. It participates in carbohydrate degradation; glycolysis; pyruvate from D-glyceraldehyde 3-phosphate: step 4/5. In terms of biological role, catalyzes the reversible conversion of 2-phosphoglycerate (2-PG) into phosphoenolpyruvate (PEP). It is essential for the degradation of carbohydrates via glycolysis. The chain is Enolase from Photobacterium profundum (strain SS9).